Reading from the N-terminus, the 179-residue chain is Ribulose bisphosphate carboxylase small subunit, chloroplastic 3 (179 aa).

The transit peptide at 1–58 (MASSATMLSSVATAARAAPAQASMVAPFVGLKSASAFPVTQKPATGLSTLPSNGGRVQ) directs the protein to the chloroplast.

Belongs to the RuBisCO small chain family. As to quaternary structure, heterohexadecamer of 8 large and 8 small subunits.

It is found in the plastid. The protein resides in the chloroplast. In terms of biological role, ruBisCO catalyzes two reactions: the carboxylation of D-ribulose 1,5-bisphosphate, the primary event in carbon dioxide fixation, as well as the oxidative fragmentation of the pentose substrate. Both reactions occur simultaneously and in competition at the same active site. Although the small subunit is not catalytic it is essential for maximal activity. The sequence is that of Ribulose bisphosphate carboxylase small subunit, chloroplastic 3 from Fritillaria agrestis (Stinkbells).